A 1480-amino-acid chain; its full sequence is Cystic fibrosis transmembrane conductance regulator (1480 aa).

The Cytoplasmic segment spans residues 1–77; that stretch reads MQRSPLEKAS…KLINALRRCF (77 aa). The chain crosses the membrane as a helical span at residues 78–98; that stretch reads FWRFMFYGIFLYLGEVTKAVQ. Residues 81-365 enclose the ABC transmembrane type-1 1 domain; sequence FMFYGIFLYL…WAVQTWYDSL (285 aa). Topologically, residues 99–122 are extracellular; the sequence is PLLLGRIIASYDPDNKEERSIAIY. Residues 123–146 traverse the membrane as a helical segment; that stretch reads LGIGLCLLFIVRTLLLHPAIFGLH. At 147-195 the chain is on the cytoplasmic side; that stretch reads HIGMQMRIAMFSLIYKKTLKLSSRVLDKISIGQLVSLLSNNLNKFDEGL. A helical membrane pass occupies residues 196–216; it reads ALAHFVWIAPLQVALLMGLIW. The Extracellular portion of the chain corresponds to 217 to 222; it reads ELLQAS. A helical membrane pass occupies residues 223-243; it reads AFCGLGFLIVLALFQAGLGRM. The Cytoplasmic segment spans residues 244-298; the sequence is MMKYRDQRAGKISERLVITSEMIENIQSVKAYCWEEAMEKMIENLRQTELKLTRK. Residues 299–319 traverse the membrane as a helical segment; that stretch reads AAYVRYFNSSAFFFSGFFVVF. Residues 320–339 lie on the Extracellular side of the membrane; it reads LSVLPYALIKGIILRKIFTT. The chain crosses the membrane as a helical span at residues 340–358; that stretch reads ISFCIVLRMAVTRQFPWAV. The Cytoplasmic portion of the chain corresponds to 359 to 858; that stretch reads QTWYDSLGAI…YLRYITVHKS (500 aa). ATP-binding positions include tryptophan 401, serine 434, 458-465, and glutamine 493; that span reads GSTGAGKT. The ABC transporter 1 domain occupies 423 to 646; sequence NGDDSLFFSN…RPDFSSKLMG (224 aa). Cysteine 524 carries S-palmitoyl cysteine lipidation. 2 positions are modified to phosphoserine: serine 549 and serine 660. Residues 654–831 are disordered R region; that stretch reads SAERRNSILT…EEINEEDLKE (178 aa). Position 670 is a phosphoserine; by PKA (serine 670). At serine 686 the chain carries Phosphoserine. Residue lysine 688 forms a Glycyl lysine isopeptide (Lys-Gly) (interchain with G-Cter in ubiquitin) linkage. A phosphoserine mark is found at serine 700 and serine 712. Position 717 is a phosphothreonine (threonine 717). A phosphoserine mark is found at serine 737, serine 753, serine 768, serine 790, serine 795, and serine 813. A helical transmembrane segment spans residues 859–879; that stretch reads LIFVLIWCLVIFLAEVAASLV. The ABC transmembrane type-1 2 domain maps to 859–1155; the sequence is LIFVLIWCLV…AVNSSIDVDS (297 aa). Topologically, residues 880-918 are extracellular; that stretch reads VLWLLGNTPLQDKGNSTHSRNNSYAVIITSTSSYYVFYI. Asparagine 894 and asparagine 900 each carry an N-linked (GlcNAc...) asparagine glycan. The chain crosses the membrane as a discontinuously helical span at residues 919-939; that stretch reads YVGVADTLLAMGFFRGLPLVH. At 940–990 the chain is on the cytoplasmic side; the sequence is TLITVSKILHHKMLHSVLQAPMSTLNTLKAGGILNRFSKDIAILDDLLPLT. The helical transmembrane segment at 991–1011 threads the bilayer; that stretch reads IFDFIQLLLIVIGAIAVVAVL. Residues 1012 to 1013 lie on the Extracellular side of the membrane; sequence QP. Residues 1014 to 1034 traverse the membrane as a helical segment; that stretch reads YIFVATVPVIVAFIMLRAYFL. Over 1035–1095 the chain is Cytoplasmic; the sequence is QTSQQLKQLE…TANWFLYLST (61 aa). A helical membrane pass occupies residues 1096 to 1116; it reads LRWFQMRIEMIFVIFFIAVTF. The Extracellular segment spans residues 1117-1130; that stretch reads ISILTTGEGEGRVG. The helical transmembrane segment at 1131 to 1151 threads the bilayer; it reads IILTLAMNIMSTLQWAVNSSI. At 1152 to 1480 the chain is on the cytoplasmic side; it reads DVDSLMRSVS…TEEEVQDTRL (329 aa). Residues 1210-1443 form the ABC transporter 2 domain; it reads MTVKDLTAKY…RSLFRQAISP (234 aa). ATP-binding positions include tyrosine 1219 and 1244 to 1251; that span reads GRTGSGKS. The interaction with GORASP2 stretch occupies residues 1386–1480; that stretch reads RTLKQAFADC…TEEEVQDTRL (95 aa). Cysteine 1395 is lipidated: S-palmitoyl cysteine. Phosphoserine occurs at positions 1444 and 1456. Residues 1452–1480 are disordered; sequence HRNSSKCKSKPQIAALKEETEEEVQDTRL. The segment covering 1470-1480 has biased composition (acidic residues); sequence ETEEEVQDTRL. The short motif at 1478-1480 is the PDZ-binding element; sequence TRL.

This sequence belongs to the ABC transporter superfamily. ABCC family. CFTR transporter (TC 3.A.1.202) subfamily. As to quaternary structure, monomer; does not require oligomerization for channel activity. May form oligomers in the membrane. Interacts with SLC26A3, SLC26A6 and NHERF1. Interacts with SHANK2. Interacts with MYO6. Interacts (via C-terminus) with GOPC (via PDZ domain); this promotes CFTR internalization and thereby decreases channel activity. Interacts with SLC4A7 through NHERF1. Found in a complex with MYO5B and RAB11A. Interacts with ANO1. Interacts with SLC26A8. Interacts with AHCYL1; the interaction increases CFTR activity. Interacts with CSE1L. The core-glycosylated form interacts with GORASP2 (via PDZ GRASP-type 1 domain) in respone to ER stress. Interacts with MARCHF2; the interaction leads to CFTR ubiqtuitination and degradation. Interacts with ADGRG2. In terms of processing, N-glycosylated. Post-translationally, phosphorylated; cAMP treatment promotes phosphorylation and activates the channel. Dephosphorylation decreases the ATPase activity (in vitro). Phosphorylation at PKA sites activates the channel. Phosphorylation at PKC sites enhances the response to phosphorylation by PKA. Phosphorylated by AMPK; this inhibits channel activity. Ubiquitinated, leading to its degradation in the lysosome. Deubiquitination by USP10 in early endosomes enhances its endocytic recycling to the cell membrane. Ubiquitinated by RNF185 during ER stress. Ubiquitinated by MARCHF2.

The protein resides in the apical cell membrane. It is found in the early endosome membrane. Its subcellular location is the cell membrane. It localises to the recycling endosome membrane. The protein localises to the endoplasmic reticulum membrane. The protein resides in the nucleus. The catalysed reaction is ATP + H2O + closed Cl(-) channel = ADP + phosphate + open Cl(-) channel.. It catalyses the reaction chloride(in) = chloride(out). The enzyme catalyses hydrogencarbonate(in) = hydrogencarbonate(out). It carries out the reaction ATP + H2O = ADP + phosphate + H(+). Its function is as follows. Epithelial ion channel that plays an important role in the regulation of epithelial ion and water transport and fluid homeostasis. Mediates the transport of chloride ions across the cell membrane. Possesses an intrinsic ATPase activity and utilizes ATP to gate its channel; the passive flow of anions through the channel is gated by cycles of ATP binding and hydrolysis by the ATP-binding domains. The ion channel is also permeable to HCO(3)(-); selectivity depends on the extracellular chloride concentration. Exerts its function also by modulating the activity of other ion channels and transporters. Contributes to the regulation of the pH and the ion content of the epithelial fluid layer. Modulates the activity of the epithelial sodium channel (ENaC) complex, in part by regulating the cell surface expression of the ENaC complex. May regulate bicarbonate secretion and salvage in epithelial cells by regulating the transporter SLC4A7. Can inhibit the chloride channel activity of ANO1. Plays a role in the chloride and bicarbonate homeostasis during sperm epididymal maturation and capacitation. In Pan troglodytes (Chimpanzee), this protein is Cystic fibrosis transmembrane conductance regulator.